Here is a 306-residue protein sequence, read N- to C-terminus: Porphobilinogen deaminase (306 aa).

An S-(dipyrrolylmethanemethyl)cysteine modification is found at Cys239.

The protein belongs to the HMBS family. In terms of assembly, monomer. The cofactor is dipyrromethane.

It carries out the reaction 4 porphobilinogen + H2O = hydroxymethylbilane + 4 NH4(+). It participates in porphyrin-containing compound metabolism; protoporphyrin-IX biosynthesis; coproporphyrinogen-III from 5-aminolevulinate: step 2/4. In terms of biological role, tetrapolymerization of the monopyrrole PBG into the hydroxymethylbilane pre-uroporphyrinogen in several discrete steps. In Helicobacter pylori (strain HPAG1), this protein is Porphobilinogen deaminase.